We begin with the raw amino-acid sequence, 156 residues long: Arginine repressor (156 aa).

This sequence belongs to the ArgR family.

The protein resides in the cytoplasm. It participates in amino-acid biosynthesis; L-arginine biosynthesis [regulation]. In terms of biological role, regulates arginine biosynthesis genes. The protein is Arginine repressor of Shigella boydii serotype 18 (strain CDC 3083-94 / BS512).